Consider the following 325-residue polypeptide: Lipoyl synthase (325 aa).

Residues Cys66, Cys71, Cys77, Cys92, Cys96, Cys99, and Ser303 each coordinate [4Fe-4S] cluster. Residues 78 to 292 (WEDREATFLI…AQFAEGLGFA (215 aa)) form the Radical SAM core domain.

Belongs to the radical SAM superfamily. Lipoyl synthase family. [4Fe-4S] cluster serves as cofactor.

It localises to the cytoplasm. It catalyses the reaction [[Fe-S] cluster scaffold protein carrying a second [4Fe-4S](2+) cluster] + N(6)-octanoyl-L-lysyl-[protein] + 2 oxidized [2Fe-2S]-[ferredoxin] + 2 S-adenosyl-L-methionine + 4 H(+) = [[Fe-S] cluster scaffold protein] + N(6)-[(R)-dihydrolipoyl]-L-lysyl-[protein] + 4 Fe(3+) + 2 hydrogen sulfide + 2 5'-deoxyadenosine + 2 L-methionine + 2 reduced [2Fe-2S]-[ferredoxin]. The protein operates within protein modification; protein lipoylation via endogenous pathway; protein N(6)-(lipoyl)lysine from octanoyl-[acyl-carrier-protein]: step 2/2. In terms of biological role, catalyzes the radical-mediated insertion of two sulfur atoms into the C-6 and C-8 positions of the octanoyl moiety bound to the lipoyl domains of lipoate-dependent enzymes, thereby converting the octanoylated domains into lipoylated derivatives. In Mycobacterium sp. (strain JLS), this protein is Lipoyl synthase.